A 485-amino-acid polypeptide reads, in one-letter code: Glucagon receptor (485 aa).

Residues methionine 1–serine 26 form the signal peptide. The Extracellular segment spans residues alanine 27–lysine 137. Intrachain disulfides connect cysteine 44–cysteine 68, cysteine 59–cysteine 101, and cysteine 82–cysteine 122. Residues asparagine 47, asparagine 60, asparagine 75, asparagine 79, and asparagine 118 are each glycosylated (N-linked (GlcNAc...) asparagine). Residues methionine 138–valine 162 form a helical membrane-spanning segment. At isoleucine 163–arginine 174 the chain is on the cytoplasmic side. The chain crosses the membrane as a helical span at residues asparagine 175–leucine 199. The Extracellular segment spans residues lysine 200–arginine 226. A disulfide bridge links cysteine 225 with cysteine 295. A helical transmembrane segment spans residues valine 227–leucine 250. Residues tyrosine 251–phenylalanine 264 are Cytoplasmic-facing. A helical transmembrane segment spans residues phenylalanine 265 to valine 286. At lysine 287–phenylalanine 304 the chain is on the extracellular side. The chain crosses the membrane as a helical span at residues tryptophan 305–isoleucine 327. The Cytoplasmic segment spans residues histidine 328–serine 351. Residues serine 351–threonine 354 form an important for allosteric inhibitor binding region. A helical transmembrane segment spans residues threonine 352 to threonine 370. The Extracellular segment spans residues aspartate 371–lysine 382. The chain crosses the membrane as a helical span at residues leucine 383–phenylalanine 403. Residues leucine 404–threonine 485 lie on the Cytoplasmic side of the membrane. A compositionally biased stretch (polar residues) spans alanine 457–serine 475. Positions alanine 457–threonine 485 are disordered. Serine 460 and serine 476 each carry phosphoserine.

The protein belongs to the G-protein coupled receptor 2 family. In terms of processing, ligand-binding promotes phosphorylation of serine residues in the C-terminal cytoplasmic domain. Phosphorylation is important for receptor endocytosis after ligand-binding. Expressed predominantly in liver, kidney, adrenal, lung and stomach, while lower levels of expression are detected in brown and white adipose tissue, cerebellum, duodenum and heart.

The protein resides in the cell membrane. In terms of biological role, G-protein coupled receptor for glucagon that plays a central role in the regulation of blood glucose levels and glucose homeostasis. Regulates the rate of hepatic glucose production by promoting glycogen hydrolysis and gluconeogenesis. Plays an important role in mediating the responses to fasting. Ligand binding causes a conformation change that triggers signaling via guanine nucleotide-binding proteins (G proteins) and modulates the activity of down-stream effectors, such as adenylate cyclase. Promotes activation of adenylate cyclase. Besides, plays a role in signaling via a phosphatidylinositol-calcium second messenger system. The polypeptide is Glucagon receptor (Gcgr) (Mus musculus (Mouse)).